The following is a 163-amino-acid chain: NADH-quinone oxidoreductase subunit I (163 aa).

2 consecutive 4Fe-4S ferredoxin-type domains span residues 54-84 and 94-123; these read LRRY…IDSA and TRYD…ETHI. The [4Fe-4S] cluster site is built by cysteine 64, cysteine 67, cysteine 70, cysteine 74, cysteine 103, cysteine 106, cysteine 109, and cysteine 113.

The protein belongs to the complex I 23 kDa subunit family. In terms of assembly, NDH-1 is composed of 14 different subunits. Subunits NuoA, H, J, K, L, M, N constitute the membrane sector of the complex. The cofactor is [4Fe-4S] cluster.

It is found in the cell inner membrane. The catalysed reaction is a quinone + NADH + 5 H(+)(in) = a quinol + NAD(+) + 4 H(+)(out). Functionally, NDH-1 shuttles electrons from NADH, via FMN and iron-sulfur (Fe-S) centers, to quinones in the respiratory chain. The immediate electron acceptor for the enzyme in this species is believed to be ubiquinone. Couples the redox reaction to proton translocation (for every two electrons transferred, four hydrogen ions are translocated across the cytoplasmic membrane), and thus conserves the redox energy in a proton gradient. This chain is NADH-quinone oxidoreductase subunit I, found in Xanthomonas oryzae pv. oryzae (strain KACC10331 / KXO85).